We begin with the raw amino-acid sequence, 166 residues long: NAD(P)H-quinone oxidoreductase subunit I, chloroplastic (166 aa).

4Fe-4S ferredoxin-type domains are found at residues 55–84 (GRIH…VDWK) and 95–124 (LNYS…MTEE). [4Fe-4S] cluster is bound by residues Cys64, Cys67, Cys70, Cys74, Cys104, Cys107, Cys110, and Cys114.

It belongs to the complex I 23 kDa subunit family. In terms of assembly, NDH is composed of at least 16 different subunits, 5 of which are encoded in the nucleus. [4Fe-4S] cluster serves as cofactor.

The protein resides in the plastid. It localises to the chloroplast thylakoid membrane. It catalyses the reaction a plastoquinone + NADH + (n+1) H(+)(in) = a plastoquinol + NAD(+) + n H(+)(out). The enzyme catalyses a plastoquinone + NADPH + (n+1) H(+)(in) = a plastoquinol + NADP(+) + n H(+)(out). NDH shuttles electrons from NAD(P)H:plastoquinone, via FMN and iron-sulfur (Fe-S) centers, to quinones in the photosynthetic chain and possibly in a chloroplast respiratory chain. The immediate electron acceptor for the enzyme in this species is believed to be plastoquinone. Couples the redox reaction to proton translocation, and thus conserves the redox energy in a proton gradient. In Picradeniopsis absinthifolia (Hairyseed bahia), this protein is NAD(P)H-quinone oxidoreductase subunit I, chloroplastic.